The following is a 246-amino-acid chain: Acetoacetyl-CoA reductase (246 aa).

Residues 12–14 (GGI) and 88–92 (CAGIT) each bind NADP(+). Substrate-binding positions include Asp-94 and 147 to 150 (QFGQ). Catalysis depends on Tyr-153, which acts as the Proton acceptor. Position 183–186 (183–186 (PGYV)) interacts with NADP(+). 184–185 (GY) is a binding site for substrate.

This sequence belongs to the short-chain dehydrogenases/reductases (SDR) family.

The protein resides in the cytoplasm. It catalyses the reaction a (3R)-3-hydroxyacyl-CoA + NADP(+) = a 3-oxoacyl-CoA + NADPH + H(+). Its pathway is biopolymer metabolism; poly-(R)-3-hydroxybutanoate biosynthesis. The protein is Acetoacetyl-CoA reductase of Allochromatium vinosum (strain ATCC 17899 / DSM 180 / NBRC 103801 / NCIMB 10441 / D) (Chromatium vinosum).